The primary structure comprises 116 residues: Peptidyl-tRNA hydrolase (116 aa).

It belongs to the PTH2 family.

The protein resides in the cytoplasm. It catalyses the reaction an N-acyl-L-alpha-aminoacyl-tRNA + H2O = an N-acyl-L-amino acid + a tRNA + H(+). Its function is as follows. The natural substrate for this enzyme may be peptidyl-tRNAs which drop off the ribosome during protein synthesis. In Methanococcus maripaludis (strain C6 / ATCC BAA-1332), this protein is Peptidyl-tRNA hydrolase.